The chain runs to 143 residues: MRLLGLDVGSKTVGVAISDPLGITAQELETIKIDESKFSFGLRQIRRIVRKYDVEGFVLGLPKNMDGSSGHSVERSKQYGERLKEKFDLPVYYMDERLTTVQADRILVEEAGVHDRVERKKVIDQMAAVLILQNYLEATRKDN.

Belongs to the YqgF nuclease family.

Its subcellular location is the cytoplasm. Its function is as follows. Could be a nuclease involved in processing of the 5'-end of pre-16S rRNA. The chain is Putative pre-16S rRNA nuclease from Lactobacillus johnsonii (strain CNCM I-12250 / La1 / NCC 533).